Here is a 431-residue protein sequence, read N- to C-terminus: MGKNVVVLGTQWGDEGKGKIVDLLTEQAKYVVRYQGGHNAGHTLVIDGVKTVLHLIPSGILRDNVKCIIGNGVVLAPDALMKEISMLKERGVPVEDRLLISEACPLILPFHCAVDIAREKARGNKAIGTTGRGIGPAYEDKVSRRGLRVGDLFNAELFAEKLKEVMKYHNFMLTEYYGAEAVDYQTTLDDALAMADYLKSMCVDVTEMLDQARKAGENILFEGAQGTLLDIDHGTYPFVTSSNTTAGGVATGSGFGPCHLDYVLGIMKAYTTRVGAGPFPTELECEIGDHLGTKGHEFGATTGRKRRPGWLDAVAMKRAIQINSLTGICLTKLDVLDGLEEVKICVGYQQPDGTVTTVTPLAAEGYELVTPVYETLPGWSENTFGVTSMDQLPQAAVNYIKRIEEILETPIDIISTGPDRNETFIRVSPFN.

GTP-binding positions include 13 to 19 (GDEGKGK) and 41 to 43 (GHT). Asp-14 acts as the Proton acceptor in catalysis. Mg(2+) contacts are provided by Asp-14 and Gly-41. Residues 14–17 (DEGK), 39–42 (NAGH), Thr-130, Arg-144, Gln-225, Thr-240, and Arg-304 each bind IMP. Catalysis depends on His-42, which acts as the Proton donor. 300–306 (ATTGRKR) is a binding site for substrate. Residues Arg-306, 332–334 (KLD), and 415–417 (STG) each bind GTP.

It belongs to the adenylosuccinate synthetase family. In terms of assembly, homodimer. Mg(2+) serves as cofactor.

Its subcellular location is the cytoplasm. It catalyses the reaction IMP + L-aspartate + GTP = N(6)-(1,2-dicarboxyethyl)-AMP + GDP + phosphate + 2 H(+). It participates in purine metabolism; AMP biosynthesis via de novo pathway; AMP from IMP: step 1/2. Functionally, plays an important role in the de novo pathway of purine nucleotide biosynthesis. Catalyzes the first committed step in the biosynthesis of AMP from IMP. This is Adenylosuccinate synthetase from Shewanella amazonensis (strain ATCC BAA-1098 / SB2B).